The primary structure comprises 67 residues: MLSLDFNNELIKAAPIVGTGVADVSARRFFGLSLNEWFYVARIAYTVVXIGAKVVDKIIDWKKATKE.

Over 1 to 36 (MLSLDFNNELIKAAPIVGTGVADVSARRFFGLSLNE) the chain is Cytoplasmic. The chain crosses the membrane as a helical; Signal-anchor for type II membrane protein span at residues 37–55 (WFYVARIAYTVVXIGAKVV). At 56–67 (DKIIDWKKATKE) the chain is on the periplasmic side.

Belongs to the T7likevirus holin family. As to quaternary structure, homomultimer.

The protein resides in the host cell inner membrane. Accumulates harmlessly in the cytoplasmic membrane until it reaches a critical concentration that triggers the formation of micron-scale pores (holes) causing host cell membrane disruption and endolysin escape into the periplasmic space. Participates in determining the precise timing of host cell lysis. Participates with the endolysin and spanin proteins in the sequential events which lead to the programmed host cell lysis releasing the mature viral particles from the host cell. The protein is Holin (17.5) of Escherichia coli (Bacteriophage T3).